A 164-amino-acid chain; its full sequence is Cilia- and flagella-associated protein 20 (164 aa).

Belongs to the CFAP20 family. Microtubule inner protein component of sperm flagellar doublet microtubules.

Its subcellular location is the nucleus. The protein resides in the cytoplasm. It localises to the cytoskeleton. It is found in the microtubule organizing center. The protein localises to the centrosome. Its subcellular location is the centriole. The protein resides in the cilium basal body. It localises to the cilium axoneme. It is found in the flagellum axoneme. Functionally, cilium- and flagellum-specific protein that plays a role in axonemal structure organization and motility. Microtubule inner protein (MIP) part of the dynein-decorated doublet microtubules (DMTs) in cilia axoneme, which is required for motile cilia beating. Involved in the regulation of the size and morphology of cilia. Required for axonemal microtubules polyglutamylation. The polypeptide is Cilia- and flagella-associated protein 20 (Cfap20) (Rattus norvegicus (Rat)).